The sequence spans 475 residues: ATP synthase subunit beta (475 aa).

Residue 152–159 (GGAGVGKT) coordinates ATP.

It belongs to the ATPase alpha/beta chains family. F-type ATPases have 2 components, CF(1) - the catalytic core - and CF(0) - the membrane proton channel. CF(1) has five subunits: alpha(3), beta(3), gamma(1), delta(1), epsilon(1). CF(0) has four main subunits: a(1), b(1), b'(1) and c(9-12).

The protein resides in the cell inner membrane. It carries out the reaction ATP + H2O + 4 H(+)(in) = ADP + phosphate + 5 H(+)(out). In terms of biological role, produces ATP from ADP in the presence of a proton gradient across the membrane. The catalytic sites are hosted primarily by the beta subunits. The protein is ATP synthase subunit beta of Cereibacter sphaeroides (strain ATCC 17025 / ATH 2.4.3) (Rhodobacter sphaeroides).